Reading from the N-terminus, the 416-residue chain is Catalase-peroxidase 2 (416 aa).

A signal peptide spans 1-20 (MLLPLIVFLLSVLIHHRIYS).

The protein belongs to the peroxidase family. Peroxidase/catalase subfamily. As to quaternary structure, homodimer or homotetramer. It depends on heme b as a cofactor. In terms of processing, formation of the three residue Trp-Tyr-Met cross-link is important for the catalase, but not the peroxidase activity of the enzyme.

It carries out the reaction H2O2 + AH2 = A + 2 H2O. The catalysed reaction is 2 H2O2 = O2 + 2 H2O. Its function is as follows. Bifunctional enzyme with both catalase and broad-spectrum peroxidase activity. The polypeptide is Catalase-peroxidase 2 (katG2) (Alkaliphilus metalliredigens (strain QYMF)).